A 1220-amino-acid chain; its full sequence is Protein transport protein Sec31A (1220 aa).

WD repeat units follow at residues 4-47 (KEVD…EIFE), 68-111 (RYHK…AGDK), 120-160 (KHTG…TPMT), 166-206 (QPPE…PIIK), 209-254 (DHSN…SPLR), 258-298 (NHAR…VLYE), and 301-342 (TNTQ…DGLR). Positions 161–471 (PGAKTQPPED…IDASQTEFEK (311 aa)) are interaction with SEC13. The stretch at 397–430 (SFSFGGKLVTFENVRMPSHQGAEQQQQQHHVFIS) is one WD 8; interaction with SEC13 repeat. 2 positions are modified to phosphoserine: serine 527 and serine 532. Lysine 647 participates in a covalent cross-link: Glycyl lysine isopeptide (Lys-Gly) (interchain with G-Cter in ubiquitin). Disordered regions lie at residues 791 to 908 (GEPV…NAYP) and 924 to 1096 (QLYA…GNTF). Residue serine 799 is modified to Phosphoserine. Residues 800 to 1113 (PKIPYEKQQL…TKKITKKPIP (314 aa)) are interaction with PDCD6. The short motif at 842-848 (GFIMHGN) is the ALG-2-binding site motif-2 (ABS-2) element. The segment covering 849 to 859 (VNPNAAGQLPT) has biased composition (polar residues). Pro residues predominate over residues 869 to 882 (PPYPQPQPYQPAQP). The segment covering 962–972 (PSSSAYALPPG) has biased composition (low complexity). Composition is skewed to polar residues over residues 984–995 (PASQRTGPQNGW) and 1031–1053 (PQSQ…SSFP). Position 1161 is a phosphothreonine (threonine 1161). Phosphoserine is present on serine 1163. Lysine 1217 participates in a covalent cross-link: Glycyl lysine isopeptide (Lys-Gly) (interchain with G-Cter in ubiquitin).

It belongs to the WD repeat SEC31 family. COPII is composed of at least 5 proteins: the SEC23/24 complex, the SEC13/31 complex and SAR1. SEC13 and SEC31 make a 2:2 tetramer that forms the edge element of the COPII outer coat. The tetramer self-assembles in multiple copies to form the complete polyhedral cage. Interacts (via WD 8) with SEC13. Interacts with PDCD6; interaction takes place in response to cytosolic calcium increase and leads to bridge together the BCR(KLHL12) complex and SEC31A, leading to monoubiquitination. Interacts with KLHL12. Post-translationally, monoubiquitinated by the BCR(KLHL12) E3 ubiquitin ligase complex, leading to regulate the size of COPII coats. Abundantly and ubiquitously expressed.

The protein localises to the cytoplasm. It localises to the cytoplasmic vesicle. Its subcellular location is the COPII-coated vesicle membrane. The protein resides in the endoplasmic reticulum membrane. It is found in the cytosol. Component of the coat protein complex II (COPII) which promotes the formation of transport vesicles from the endoplasmic reticulum (ER). The coat has two main functions, the physical deformation of the endoplasmic reticulum membrane into vesicles and the selection of cargo molecules. The protein is Protein transport protein Sec31A (SEC31A) of Homo sapiens (Human).